Reading from the N-terminus, the 1251-residue chain is Myosin-1 (1251 aa).

The disordered stretch occupies residues 1–37; the sequence is MGQSKRPFKNKEEKKSRGFGRSRHDDAGAGGRPQVKK. Positions 9–27 are enriched in basic and acidic residues; that stretch reads KNKEEKKSRGFGRSRHDDA. In terms of domain architecture, Myosin motor spans 48–727; it reads IGVSDLTLLS…TLFALEHMRD (680 aa). Position 141-148 (141-148) interacts with ATP; it reads GESGAGKT. S369 is modified (phosphoserine). The actin-binding stretch occupies residues 416-498; sequence TIGILDIYGF…PGVFAALNDA (83 aa). IQ domains lie at 731 to 751 and 752 to 777; these read HNMA…RTEC and AIRI…QGHK. The 196-residue stretch at 785–980 folds into the TH1 domain; sequence RRRYSLVGSR…PGEPANSVSK (196 aa). 2 disordered regions span residues 958–1093 and 1135–1227; these read RDDV…SNEL and AKTP…ASIA. The segment covering 1040-1052 has biased composition (low complexity); the sequence is VAQSVTAVAAAHA. A compositionally biased stretch (pro residues) spans 1061-1073; the sequence is RPPPPPPPTQPPA. The SH3 domain maps to 1074–1135; that stretch reads PKKDTAKALY…PEAYLEPIVA (62 aa). Over residues 1139-1148 the composition is skewed to pro residues; sequence SLPPPPPSLP. Composition is skewed to polar residues over residues 1150–1161 and 1216–1225; these read QSKSAVSNTLPN and ATPSSLSNAS.

This sequence belongs to the TRAFAC class myosin-kinesin ATPase superfamily. Myosin family. Phosphorylation of the TEDS site (Ser-369) is required for the polarization of the actin cytoskeleton. Phosphorylation probably activates the myosin-I ATPase activity.

The protein localises to the cytoplasm. It localises to the cytoskeleton. Its subcellular location is the actin patch. Functionally, type-I myosin implicated in the organization of the actin cytoskeleton. Required for proper actin cytoskeleton polarization. At the cell cortex, assembles in patch-like structures together with proteins from the actin-polymerizing machinery and promotes actin assembly. Functions as actin nucleation-promoting factor (NPF) for the Arp2/3 complex. The sequence is that of Myosin-1 (MYO1) from Coccidioides immitis (strain RS) (Valley fever fungus).